Consider the following 198-residue polypeptide: MORN repeat-containing protein 4 homolog (198 aa).

At A2 the chain carries N-acetylalanine. Low complexity predominate over residues 23 to 45; it reads QHQQHPHQQGQHGHHQQGQGQSQ. Positions 23–46 are disordered; sequence QHQQHPHQQGQHGHHQQGQGQSQY. 4 MORN repeats span residues 64 to 87, 88 to 109, 111 to 132, and 134 to 153; these read YIGE…DGTR, YDGQ…ADGA, YEGE…ADGM, and YEGE…TFQD.

As to quaternary structure, interacts with ninaC. Phosphorylated under dark conditions and is dephosphorylated by light exposure. Retina. Expressed primarily in the phototransducing compartment of photoreceptor cells, the rhabdomeres and its expression is dependent on ninaC protein (at protein level).

The protein resides in the membrane. It is found in the cell projection. Its subcellular location is the rhabdomere membrane. In terms of biological role, plays a role in promoting axonal degeneration following neuronal injury by toxic insult or trauma. Organizes rhabdomeric components to suppress random activation of the phototransduction cascade and thus increases the signaling fidelity of dark-adapted photoreceptors. The rtp/ninaC complex is required for stability of inad and inac and the normal termination of phototransduction in the retina. In Drosophila melanogaster (Fruit fly), this protein is MORN repeat-containing protein 4 homolog.